Here is a 145-residue protein sequence, read N- to C-terminus: Basic phospholipase A2 GL1-1 (145 aa).

The N-terminal stretch at 1–21 (MYPAHLLVLLAVCVSLLGASA) is a signal peptide. Residues 22–27 (IPPLPL) constitute a propeptide that is removed on maturation. Intrachain disulfides connect Cys-38/Cys-98, Cys-54/Cys-144, Cys-56/Cys-72, Cys-71/Cys-125, Cys-78/Cys-118, Cys-87/Cys-111, and Cys-105/Cys-116. Ca(2+) is bound by residues Tyr-55, Gly-57, and Gly-59. The active site involves His-75. Asp-76 lines the Ca(2+) pocket. Asp-119 is an active-site residue.

It belongs to the phospholipase A2 family. Group I subfamily. D49 sub-subfamily. Requires Ca(2+) as cofactor. In terms of tissue distribution, expressed by the venom gland.

It localises to the secreted. The enzyme catalyses a 1,2-diacyl-sn-glycero-3-phosphocholine + H2O = a 1-acyl-sn-glycero-3-phosphocholine + a fatty acid + H(+). Functionally, PLA2 catalyzes the calcium-dependent hydrolysis of the 2-acyl groups in 3-sn-phosphoglycerides. This chain is Basic phospholipase A2 GL1-1, found in Laticauda semifasciata (Black-banded sea krait).